A 591-amino-acid polypeptide reads, in one-letter code: Coiled-coil domain-containing protein 148 (591 aa).

Coiled-coil stretches lie at residues 166-195 (VKKQ…SIKI), 352-417 (MLAK…KKKK), and 466-498 (ERRL…KQVA).

The protein is Coiled-coil domain-containing protein 148 (CCDC148) of Homo sapiens (Human).